The sequence spans 618 residues: Chaperone protein HscA homolog (618 aa).

This sequence belongs to the heat shock protein 70 family.

Chaperone involved in the maturation of iron-sulfur cluster-containing proteins. Has a low intrinsic ATPase activity which is markedly stimulated by HscB. This chain is Chaperone protein HscA homolog, found in Variovorax paradoxus (strain S110).